The chain runs to 350 residues: NADH-quinone oxidoreductase subunit H (350 aa).

The next 8 helical transmembrane spans lie at 5–25 (FIIE…IMAM), 76–96 (FLFV…SAVI), 118–138 (IALL…MIGG), 162–182 (IAMG…SLKV), 190–210 (MNWN…CSFA), 243–263 (LFAE…LFFG), 284–304 (LLGI…YMWV), and 319–339 (LGWR…GAVI).

Belongs to the complex I subunit 1 family. In terms of assembly, NDH-1 is composed of 14 different subunits. Subunits NuoA, H, J, K, L, M, N constitute the membrane sector of the complex.

The protein localises to the cell inner membrane. It carries out the reaction a quinone + NADH + 5 H(+)(in) = a quinol + NAD(+) + 4 H(+)(out). In terms of biological role, NDH-1 shuttles electrons from NADH, via FMN and iron-sulfur (Fe-S) centers, to quinones in the respiratory chain. The immediate electron acceptor for the enzyme in this species is believed to be ubiquinone. Couples the redox reaction to proton translocation (for every two electrons transferred, four hydrogen ions are translocated across the cytoplasmic membrane), and thus conserves the redox energy in a proton gradient. This subunit may bind ubiquinone. In Flavobacterium johnsoniae (strain ATCC 17061 / DSM 2064 / JCM 8514 / BCRC 14874 / CCUG 350202 / NBRC 14942 / NCIMB 11054 / UW101) (Cytophaga johnsonae), this protein is NADH-quinone oxidoreductase subunit H.